We begin with the raw amino-acid sequence, 149 residues long: Hordoindoline-A (149 aa).

Positions 1-19 are cleaved as a signal peptide; sequence MKALFLMGLLALVASAAFA. A propeptide spanning residues 20 to 28 is cleaved from the precursor; that stretch reads QYGEVVGSY. Residues 148 to 149 constitute a propeptide, removed in mature form; it reads YW.

Post-translationally, five disulfide bonds are present. Found in endosperm and aleurone layer of developing kernels, but not in the embryo.

It is found in the membrane. It localises to the secreted. The protein resides in the extracellular space. In terms of biological role, acts as a membranotoxin, probably through its antibacterial and antifungal activities, contributing to the defense mechanism of the plant against predators. Forms monovalent cation-selective ion channels in membranes. Contributes to grain texture and hardness. This is Hordoindoline-A (HINA) from Hordeum vulgare (Barley).